A 698-amino-acid chain; its full sequence is Endogenous retrovirus group K member 21 Env polyprotein (698 aa).

The disordered stretch occupies residues 1–25; sequence MHPSEMQRKAPPRRRRHRNRAPLTH. The first 88 residues, 1 to 88, serve as a signal peptide directing secretion; the sequence is MHPSEMQRKA…ALMIVSMVVS (88 aa). Positions 10–20 are enriched in basic residues; sequence APPRRRRHRNR. The Extracellular segment spans residues 89–631; sequence LPMPAGAAAA…NLNPVTWVKT (543 aa). N99, N127, N152, N273, N354, N371, and N460 each carry an N-linked (GlcNAc...) asparagine glycan. A fusion peptide region spans residues 465–485; that stretch reads FIFTLIAVIMGLIAVTAMAAV. N-linked (GlcNAc...) asparagine glycans are attached at residues N506, N553, N565, and N584. A helical transmembrane segment spans residues 632-652; sequence IGSTTIINLILILVCLFCLLL. Residues 653–698 are Cytoplasmic-facing; sequence VCRCTQQLRRDSDHRERAMMTMVVLSKRKGGNVGKSKRDQIVTVSV.

The protein belongs to the beta type-B retroviral envelope protein family. HERV class-II K(HML-2) env subfamily. The surface (SU) and transmembrane (TM) proteins form a heterodimer. SU and TM are attached by noncovalent interactions or by a labile interchain disulfide bond. Post-translationally, specific enzymatic cleavages in vivo yield the mature SU and TM proteins.

Its subcellular location is the cell membrane. It is found in the virion. Retroviral envelope proteins mediate receptor recognition and membrane fusion during early infection. Endogenous envelope proteins may have kept, lost or modified their original function during evolution. This endogenous envelope protein has lost its original fusogenic properties. Its function is as follows. SU mediates receptor recognition. In terms of biological role, TM anchors the envelope heterodimer to the viral membrane through one transmembrane domain. The other hydrophobic domain, called fusion peptide, mediates fusion of the viral membrane with the target cell membrane. The protein is Endogenous retrovirus group K member 21 Env polyprotein (ERVK-21) of Homo sapiens (Human).